We begin with the raw amino-acid sequence, 131 residues long: Arsenate reductase (131 aa).

Catalysis depends on nucleophile residues C10, C82, and C89. 2 disulfide bridges follow: C10/C82 and C82/C89.

Belongs to the low molecular weight phosphotyrosine protein phosphatase family. Thioredoxin-coupled ArsC subfamily.

It is found in the cytoplasm. The enzyme catalyses arsenate + [thioredoxin]-dithiol + H(+) = arsenite + [thioredoxin]-disulfide + H2O. Functionally, catalyzes the reduction of arsenate [As(V)] to arsenite [As(III)]. The polypeptide is Arsenate reductase (Staphylococcus aureus (strain bovine RF122 / ET3-1)).